A 1489-amino-acid chain; its full sequence is DNA-directed RNA polymerase subunit beta (1489 aa).

This sequence belongs to the RNA polymerase beta chain family. As to quaternary structure, the RNAP catalytic core consists of 2 alpha, 1 beta, 1 beta' and 1 omega subunit. When a sigma factor is associated with the core the holoenzyme is formed, which can initiate transcription.

The enzyme catalyses RNA(n) + a ribonucleoside 5'-triphosphate = RNA(n+1) + diphosphate. In terms of biological role, DNA-dependent RNA polymerase catalyzes the transcription of DNA into RNA using the four ribonucleoside triphosphates as substrates. This is DNA-directed RNA polymerase subunit beta from Koribacter versatilis (strain Ellin345).